Reading from the N-terminus, the 336-residue chain is ATP-dependent 6-phosphofructokinase (336 aa).

Position 11 (Gly11) interacts with ATP. Residue 21–25 participates in ADP binding; that stretch reads RAVVR. ATP contacts are provided by residues 72–73 and 102–105; these read RY and GDGS. Asp103 provides a ligand contact to Mg(2+). 125–127 is a substrate binding site; sequence TID. Asp127 acts as the Proton acceptor in catalysis. Arg154 provides a ligand contact to ADP. Residues Arg162 and 169–171 each bind substrate; that span reads MGR. ADP is bound by residues 185–187, Lys211, and 213–215; these read GAD and KKH. Residues Glu222, Arg244, and 250-253 contribute to the substrate site; that span reads HIQR.

It belongs to the phosphofructokinase type A (PFKA) family. ATP-dependent PFK group I subfamily. Prokaryotic clade 'B1' sub-subfamily. As to quaternary structure, homotetramer. Mg(2+) is required as a cofactor.

Its subcellular location is the cytoplasm. The catalysed reaction is beta-D-fructose 6-phosphate + ATP = beta-D-fructose 1,6-bisphosphate + ADP + H(+). It functions in the pathway carbohydrate degradation; glycolysis; D-glyceraldehyde 3-phosphate and glycerone phosphate from D-glucose: step 3/4. Its activity is regulated as follows. Allosterically activated by ADP and other diphosphonucleosides, and allosterically inhibited by phosphoenolpyruvate. In terms of biological role, catalyzes the phosphorylation of D-fructose 6-phosphate to fructose 1,6-bisphosphate by ATP, the first committing step of glycolysis. The sequence is that of ATP-dependent 6-phosphofructokinase from Streptococcus sanguinis (strain SK36).